The chain runs to 76 residues: MPHIDVKHFPRNLSEEEKKIVAEDLAAVLKKHFGSSNDSLSVAFNEIQPERWKDEVYDPIIKPHLDTLAKKPGYSY.

The active-site Proton acceptor; via imino nitrogen is the proline 2.

The protein belongs to the 4-oxalocrotonate tautomerase family. PptA subfamily. In terms of assembly, homodimer.

The protein localises to the cytoplasm. The polypeptide is Tautomerase PptA (Pectobacterium atrosepticum (strain SCRI 1043 / ATCC BAA-672) (Erwinia carotovora subsp. atroseptica)).